The primary structure comprises 69 residues: Regulatory protein MokC (69 aa).

The helical transmembrane segment at 24–44 (KAMIVALIVICITAVVAALVT) threads the bilayer.

It belongs to the Hok/Gef family.

The protein resides in the cell inner membrane. Functionally, might be the toxic component of a type I toxin-antitoxin (TA) system. Regulatory peptide which completely overlaps hokC and enables hokC expression. The chain is Regulatory protein MokC (mokC) from Escherichia coli (strain K12).